Reading from the N-terminus, the 1881-residue chain is Endoribonuclease Dicer-S (1881 aa).

Positions 41 to 217 (LLEAALDHNI…DLEEKIQNLE (177 aa)) constitute a Helicase ATP-binding domain. Residue 54 to 61 (LNSGSGKT) participates in ATP binding. The DECH box motif lies at 165–168 (DECH). Residues 425–594 (SFPSPFTNIL…SMDCGNTESE (170 aa)) form the Helicase C-terminal domain. In terms of domain architecture, Dicer dsRNA-binding fold spans 622 to 714 (AIGHINRYCA…MPVGKETVKY (93 aa)). The 148-residue stretch at 887–1034 (KFVEDIEKSE…LVPELCAIHP (148 aa)) folds into the PAZ domain. 2 RNase III domains span residues 1249–1380 (TSDI…ETSG) and 1625–1783 (FENF…MDSG). 6 residues coordinate Mg(2+): E1293, D1371, E1374, E1664, D1769, and E1772. The 66-residue stretch at 1808–1873 (VPRSPVRELL…ARRALRSLKA (66 aa)) folds into the DRBM domain.

The protein belongs to the helicase family. Dicer subfamily. Component of the RISC loading complex (RLC), or micro-RNA (miRNA) loading complex (miRLC), which is composed of dicer1, ago2 and tarbp2; dicer1 and tarbp2 are required to process precursor miRNAs (pre-miRNAs) to mature miRNAs and then load them onto ago2. Note that the trimeric RLC/miRLC is also referred to as RISC. The cofactor is Mg(2+). Mn(2+) is required as a cofactor.

It is found in the cytoplasm. The catalysed reaction is Endonucleolytic cleavage to 5'-phosphomonoester.. Its function is as follows. Double-stranded RNA (dsRNA) endoribonuclease playing a central role in short dsRNA-mediated post-transcriptional gene silencing. Cleaves naturally occurring long dsRNAs and short hairpin pre-microRNAs (miRNA) into fragments of twenty-one to twenty-three nucleotides with 3' overhang of two nucleotides, producing respectively short interfering RNAs (siRNA) and mature microRNAs. SiRNAs and miRNAs serve as guide to direct the RNA-induced silencing complex (RISC) to complementary RNAs to degrade them or prevent their translation. Gene silencing mediated by siRNAs, also called RNA interference, controls the elimination of transcripts from mobile and repetitive DNA elements of the genome but also the degradation of exogenous RNA of viral origin for instance. The miRNA pathway on the other side is a mean to specifically regulate the expression of target genes. During embryonic development, at the left-right organizer, post-transcriptionally regulates the expression of dand5 in flow sensor cells. In post-flow stages, acts along with Bicc1 to repress dand5 mRNA translation and decay. Decreased Dand5 expression lifts repression of Nodal and defines leftness by induction of the lateral plate mesoderm Nodal signaling cascade. In Xenopus laevis (African clawed frog), this protein is Endoribonuclease Dicer-S (dicer1.S).